The primary structure comprises 384 residues: 23S rRNA (uracil(747)-C(5))-methyltransferase RlmC (384 aa).

[4Fe-4S] cluster-binding residues include C7, C15, C18, and C94. S-adenosyl-L-methionine-binding residues include Q219, F248, E269, and N316. C343 functions as the Nucleophile in the catalytic mechanism.

It belongs to the class I-like SAM-binding methyltransferase superfamily. RNA M5U methyltransferase family. RlmC subfamily.

It catalyses the reaction uridine(747) in 23S rRNA + S-adenosyl-L-methionine = 5-methyluridine(747) in 23S rRNA + S-adenosyl-L-homocysteine + H(+). Its function is as follows. Catalyzes the formation of 5-methyl-uridine at position 747 (m5U747) in 23S rRNA. In Shewanella sp. (strain ANA-3), this protein is 23S rRNA (uracil(747)-C(5))-methyltransferase RlmC.